Here is a 523-residue protein sequence, read N- to C-terminus: Probable E3 ubiquitin-protein ligase ZFP1 (523 aa).

Over residues 18-28 (EQGHSHIHSES) the composition is skewed to basic and acidic residues. The disordered stretch occupies residues 18 to 43 (EQGHSHIHSESFNRTGNDSSDQGAQH). A compositionally biased stretch (polar residues) spans 29 to 40 (FNRTGNDSSDQG). An RING-type; atypical zinc finger spans residues 471–512 (CIICQEEYQVKECIGTLDCGHRYHEDCIKQWLMVKNLCPICK).

This sequence belongs to the RING-type zinc finger family. Interacts with DJA6.

It catalyses the reaction S-ubiquitinyl-[E2 ubiquitin-conjugating enzyme]-L-cysteine + [acceptor protein]-L-lysine = [E2 ubiquitin-conjugating enzyme]-L-cysteine + N(6)-ubiquitinyl-[acceptor protein]-L-lysine.. The protein operates within protein modification; protein ubiquitination. Functionally, probable E3 ubiquitin-protein ligase. In Oryza sativa subsp. japonica (Rice), this protein is Probable E3 ubiquitin-protein ligase ZFP1.